The sequence spans 287 residues: Aquaporin PIP1-1 (287 aa).

A run of 2 helical transmembrane segments spans residues 57–77 (IAEF…VMGV) and 92–114 (IAWS…SGHI). An NPA 1 motif is present at residues 115 to 117 (NPA). 3 helical membrane-spanning segments follow: residues 134 to 154 (VFYI…VKGF), 176 to 196 (GDGL…VFSA), and 210 to 230 (ILAP…TMGI). An NPA 2 motif is present at residues 236-238 (NPA). Residues 258–278 (IFWVGPFIGAALAAIYHQVII) form a helical membrane-spanning segment.

Belongs to the MIP/aquaporin (TC 1.A.8) family. PIP (TC 1.A.8.11) subfamily. May interact with PIP1-2 to form heteromers. Highly expressed in roots, shoots and developing tassels, and at lower levels in leaves.

It is found in the cell membrane. Functionally, water channel required to facilitate the transport of water across cell membrane. Active as heteromers with PIP1-2, but not as homomers. The protein is Aquaporin PIP1-1 (PIP1-1) of Zea mays (Maize).